An 800-amino-acid polypeptide reads, in one-letter code: Phenylalanine--tRNA ligase beta subunit (800 aa).

Residues 39–154 (TKEIKNLVVG…TEVKPGTDAL (116 aa)) form the tRNA-binding domain. The 76-residue stretch at 408 to 483 (CFVTPIDISV…RIYGYDKIPS (76 aa)) folds into the B5 domain. Mg(2+) contacts are provided by D461, D467, E470, and E471. Residues 708–800 (PRFPGVSRDI…ALKSEGATIR (93 aa)) enclose the FDX-ACB domain.

It belongs to the phenylalanyl-tRNA synthetase beta subunit family. Type 1 subfamily. As to quaternary structure, tetramer of two alpha and two beta subunits. Requires Mg(2+) as cofactor.

It is found in the cytoplasm. It carries out the reaction tRNA(Phe) + L-phenylalanine + ATP = L-phenylalanyl-tRNA(Phe) + AMP + diphosphate + H(+). The sequence is that of Phenylalanine--tRNA ligase beta subunit from Staphylococcus saprophyticus subsp. saprophyticus (strain ATCC 15305 / DSM 20229 / NCIMB 8711 / NCTC 7292 / S-41).